The chain runs to 551 residues: E3 ubiquitin-protein ligase TRIM8 (551 aa).

The RING-type zinc-finger motif lies at 15-56; that stretch reads CPICLHVFVEPVQLPCKHNFCRGCIGEAWAKDSGLVRCPECN. 2 consecutive B box-type zinc fingers follow at residues 92 to 132 and 140 to 182; these read CVFC…ARGH and VRAW…VCDV. Residues 181–249 are a coiled coil; that stretch reads DVEIRRNEIR…HQLLDEDLRQ (69 aa).

It belongs to the TRIM/RBCC family. As to quaternary structure, homodimer. Interacts with SOCS1 (via) SH2 domain and SOCS box. Interacts with HSP90AB1; prevents nucleus translocation of phosphorylated STAT3 and HSP90AB1. Interacts with MAP3K7/TAK1. Interacts with PIAS3. Interacts with TICAM1. Interacts with TRIM15; this interaction prevents TRIM8 cytoplasmic translocation. As to expression, widely expressed. Expressed in glomerular podocytes of kidneys.

The protein localises to the cytoplasm. The protein resides in the nucleus. It localises to the nuclear body. It catalyses the reaction S-ubiquitinyl-[E2 ubiquitin-conjugating enzyme]-L-cysteine + [acceptor protein]-L-lysine = [E2 ubiquitin-conjugating enzyme]-L-cysteine + N(6)-ubiquitinyl-[acceptor protein]-L-lysine.. Its pathway is protein modification; protein ubiquitination. In terms of biological role, E3 ubiquitin-protein ligase that participates in multiple biological processes including cell survival, differentiation, apoptosis, and in particular, the innate immune response. Participates in the activation of interferon-gamma signaling by promoting proteasomal degradation of the repressor SOCS1. Plays a positive role in the TNFalpha and IL-1beta signaling pathways. Mechanistically, induces the 'Lys-63'-linked polyubiquitination of MAP3K7/TAK1 component leading to the activation of NF-kappa-B. Also modulates STAT3 activity through negative regulation of PIAS3, either by degradation of PIAS3 through the ubiquitin-proteasome pathway or exclusion of PIAS3 from the nucleus. Negatively regulates TLR3/4-mediated innate immune response by catalyzing 'Lys-6'- and 'Lys-33'-linked polyubiquitination of TICAM1 and thereby disrupting the TICAM1-TBK1 interaction. The protein is E3 ubiquitin-protein ligase TRIM8 (TRIM8) of Homo sapiens (Human).